A 492-amino-acid polypeptide reads, in one-letter code: Ribulose bisphosphate carboxylase large chain (492 aa).

Substrate-binding residues include Asn-131 and Thr-181. The Proton acceptor role is filled by Lys-183. Position 185 (Lys-185) interacts with substrate. The Mg(2+) site is built by Lys-209, Asp-211, and Glu-212. Residue Lys-209 is modified to N6-carboxylysine. His-301 serves as the catalytic Proton acceptor. Positions 302, 334, and 386 each coordinate substrate.

It belongs to the RuBisCO large chain family. Type I subfamily. As to quaternary structure, heterohexadecamer of 8 large chains and 8 small chains. Mg(2+) is required as a cofactor.

It catalyses the reaction 2 (2R)-3-phosphoglycerate + 2 H(+) = D-ribulose 1,5-bisphosphate + CO2 + H2O. The enzyme catalyses D-ribulose 1,5-bisphosphate + O2 = 2-phosphoglycolate + (2R)-3-phosphoglycerate + 2 H(+). In terms of biological role, ruBisCO catalyzes two reactions: the carboxylation of D-ribulose 1,5-bisphosphate, the primary event in carbon dioxide fixation, as well as the oxidative fragmentation of the pentose substrate. Both reactions occur simultaneously and in competition at the same active site. In Nitrosococcus oceani (strain ATCC 19707 / BCRC 17464 / JCM 30415 / NCIMB 11848 / C-107), this protein is Ribulose bisphosphate carboxylase large chain.